A 295-amino-acid chain; its full sequence is Release factor glutamine methyltransferase (295 aa).

Residues 127 to 131, D150, F179, and N195 each bind S-adenosyl-L-methionine; that span reads GTGSG. Substrate is bound at residue 195 to 198; sequence NPPY.

It belongs to the protein N5-glutamine methyltransferase family. PrmC subfamily.

The enzyme catalyses L-glutaminyl-[peptide chain release factor] + S-adenosyl-L-methionine = N(5)-methyl-L-glutaminyl-[peptide chain release factor] + S-adenosyl-L-homocysteine + H(+). In terms of biological role, methylates the class 1 translation termination release factors RF1/PrfA and RF2/PrfB on the glutamine residue of the universally conserved GGQ motif. This Nitratidesulfovibrio vulgaris (strain ATCC 29579 / DSM 644 / CCUG 34227 / NCIMB 8303 / VKM B-1760 / Hildenborough) (Desulfovibrio vulgaris) protein is Release factor glutamine methyltransferase.